The chain runs to 71 residues: UPF0352 protein Asuc_0778 (71 aa).

Belongs to the UPF0352 family.

The sequence is that of UPF0352 protein Asuc_0778 from Actinobacillus succinogenes (strain ATCC 55618 / DSM 22257 / CCUG 43843 / 130Z).